The following is a 313-amino-acid chain: Ribosomal RNA small subunit methyltransferase H (313 aa).

S-adenosyl-L-methionine is bound by residues 35–37, Asp55, Phe81, Asp103, and Gln110; that span reads GGH.

This sequence belongs to the methyltransferase superfamily. RsmH family.

It localises to the cytoplasm. It carries out the reaction cytidine(1402) in 16S rRNA + S-adenosyl-L-methionine = N(4)-methylcytidine(1402) in 16S rRNA + S-adenosyl-L-homocysteine + H(+). Specifically methylates the N4 position of cytidine in position 1402 (C1402) of 16S rRNA. The chain is Ribosomal RNA small subunit methyltransferase H from Pseudomonas aeruginosa (strain UCBPP-PA14).